We begin with the raw amino-acid sequence, 116 residues long: MLKDFSRSMRLERSLYKEIAVIIQKNLRDPRLNSFITITEVKLSYDLSYAKVFITFLNYDDKKNIKIILGILQNATGYIRSLLNKKIYLRIVPKLFFVYDTSLINGIFISELIKNI.

Belongs to the RbfA family. Monomer. Binds 30S ribosomal subunits, but not 50S ribosomal subunits or 70S ribosomes.

Its subcellular location is the cytoplasm. One of several proteins that assist in the late maturation steps of the functional core of the 30S ribosomal subunit. Associates with free 30S ribosomal subunits (but not with 30S subunits that are part of 70S ribosomes or polysomes). Required for efficient processing of 16S rRNA. May interact with the 5'-terminal helix region of 16S rRNA. This Buchnera aphidicola subsp. Cinara cedri (strain Cc) protein is Ribosome-binding factor A.